A 50-amino-acid polypeptide reads, in one-letter code: Protein PsbN (50 aa).

A helical membrane pass occupies residues 14–34 (VAVTILAVLLALTGFGLWTAF).

It belongs to the PsbN family.

It is found in the cellular thylakoid membrane. May play a role in photosystem I and II biogenesis. The sequence is that of Protein PsbN from Prochlorococcus marinus subsp. pastoris (strain CCMP1986 / NIES-2087 / MED4).